The primary structure comprises 1649 residues: DNA-directed RNA polymerase subunit beta' (1649 aa).

Zn(2+) is bound by residues Cys-63, Cys-65, Cys-78, and Cys-81. The Mg(2+) site is built by Asp-747, Asp-749, and Asp-751. Residues Cys-1078, Cys-1269, Cys-1276, and Cys-1279 each coordinate Zn(2+).

Belongs to the RNA polymerase beta' chain family. The RNAP catalytic core consists of 2 alpha, 1 beta, 1 beta' and 1 omega subunit. When a sigma factor is associated with the core the holoenzyme is formed, which can initiate transcription. It depends on Mg(2+) as a cofactor. Zn(2+) is required as a cofactor.

The catalysed reaction is RNA(n) + a ribonucleoside 5'-triphosphate = RNA(n+1) + diphosphate. DNA-dependent RNA polymerase catalyzes the transcription of DNA into RNA using the four ribonucleoside triphosphates as substrates. This Thermosipho melanesiensis (strain DSM 12029 / CIP 104789 / BI429) protein is DNA-directed RNA polymerase subunit beta'.